The primary structure comprises 528 residues: Phosphoenolpyruvate carboxykinase (ATP) (528 aa).

R56, Y192, and K198 together coordinate substrate. ATP is bound by residues K198, H217, and 233–241 (GLSGTGKTT). 2 residues coordinate Mn(2+): K198 and H217. D254 is a Mn(2+) binding site. ATP contacts are provided by E282, R319, and T444. R319 is a binding site for substrate.

The protein belongs to the phosphoenolpyruvate carboxykinase (ATP) family. Mn(2+) is required as a cofactor.

It is found in the cytoplasm. The catalysed reaction is oxaloacetate + ATP = phosphoenolpyruvate + ADP + CO2. Its pathway is carbohydrate biosynthesis; gluconeogenesis. Functionally, involved in the gluconeogenesis. Catalyzes the conversion of oxaloacetate (OAA) to phosphoenolpyruvate (PEP) through direct phosphoryl transfer between the nucleoside triphosphate and OAA. In Bacillus anthracis (strain A0248), this protein is Phosphoenolpyruvate carboxykinase (ATP).